Consider the following 419-residue polypeptide: UDP-N-acetylglucosamine 1-carboxyvinyltransferase (419 aa).

22-23 (KN) provides a ligand contact to phosphoenolpyruvate. Residue R91 participates in UDP-N-acetyl-alpha-D-glucosamine binding. C115 acts as the Proton donor in catalysis. Position 115 is a 2-(S-cysteinyl)pyruvic acid O-phosphothioketal (C115). Residues 120–124 (RPVDL), 160–163 (KVSV), D305, and I327 contribute to the UDP-N-acetyl-alpha-D-glucosamine site.

It belongs to the EPSP synthase family. MurA subfamily.

It localises to the cytoplasm. It carries out the reaction phosphoenolpyruvate + UDP-N-acetyl-alpha-D-glucosamine = UDP-N-acetyl-3-O-(1-carboxyvinyl)-alpha-D-glucosamine + phosphate. Its pathway is cell wall biogenesis; peptidoglycan biosynthesis. In vitro inhibited by covalent binding of fosfomycin and the fungal product terreic acid in the presence of substrate UDP-N-acetylglucosamine, with an inactivation rate constant of 130 M(-1)sec(-1) for terreic acid. Functionally, cell wall formation. Adds enolpyruvyl to UDP-N-acetylglucosamine. Target for the antibiotic fosfomycin. In Enterobacter cloacae subsp. cloacae (strain ATCC 13047 / DSM 30054 / NBRC 13535 / NCTC 10005 / WDCM 00083 / NCDC 279-56), this protein is UDP-N-acetylglucosamine 1-carboxyvinyltransferase.